A 560-amino-acid chain; its full sequence is Proline--tRNA ligase (560 aa).

The protein belongs to the class-II aminoacyl-tRNA synthetase family. ProS type 1 subfamily. Homodimer.

The protein localises to the cytoplasm. The enzyme catalyses tRNA(Pro) + L-proline + ATP = L-prolyl-tRNA(Pro) + AMP + diphosphate. Its function is as follows. Catalyzes the attachment of proline to tRNA(Pro) in a two-step reaction: proline is first activated by ATP to form Pro-AMP and then transferred to the acceptor end of tRNA(Pro). As ProRS can inadvertently accommodate and process non-cognate amino acids such as alanine and cysteine, to avoid such errors it has two additional distinct editing activities against alanine. One activity is designated as 'pretransfer' editing and involves the tRNA(Pro)-independent hydrolysis of activated Ala-AMP. The other activity is designated 'posttransfer' editing and involves deacylation of mischarged Ala-tRNA(Pro). The misacylated Cys-tRNA(Pro) is not edited by ProRS. This Vesicomyosocius okutanii subsp. Calyptogena okutanii (strain HA) protein is Proline--tRNA ligase.